Here is a 229-residue protein sequence, read N- to C-terminus: Lantibiotic transport ATP-binding protein SrtF (229 aa).

An ABC transporter domain is found at 2–225; it reads LKIQNLKKSY…EELFNNQILF (224 aa). An ATP-binding site is contributed by 34-41; the sequence is GPNGAGKS.

The protein belongs to the ABC transporter superfamily.

In terms of biological role, implicated in the export process of the lantibiotic SrtA. In Streptococcus pyogenes serotype M1, this protein is Lantibiotic transport ATP-binding protein SrtF (srtF).